A 433-amino-acid polypeptide reads, in one-letter code: Glutamate-1-semialdehyde 2,1-aminomutase (433 aa).

Position 272 is an N6-(pyridoxal phosphate)lysine (Lys-272).

Belongs to the class-III pyridoxal-phosphate-dependent aminotransferase family. HemL subfamily. As to quaternary structure, homodimer. Requires pyridoxal 5'-phosphate as cofactor.

The protein localises to the cytoplasm. It catalyses the reaction (S)-4-amino-5-oxopentanoate = 5-aminolevulinate. Its pathway is porphyrin-containing compound metabolism; protoporphyrin-IX biosynthesis; 5-aminolevulinate from L-glutamyl-tRNA(Glu): step 2/2. It functions in the pathway porphyrin-containing compound metabolism; chlorophyll biosynthesis. The sequence is that of Glutamate-1-semialdehyde 2,1-aminomutase from Synechococcus sp. (strain WH7803).